Reading from the N-terminus, the 925-residue chain is NADH:fumarate oxidoreductase (925 aa).

Thr447 carries the post-translational modification FMN phosphoryl threonine. The FAD site is built by Ala492, Glu511, Asn519, Thr520, Ala525, Gly526, and Val633. Ala525 serves as a coordination point for fumarate. A succinate-binding site is contributed by Ala525. Positions 719, 731, and 732 each coordinate succinate. Fumarate contacts are provided by Ser731 and Glu732. Arg756 serves as the catalytic Proton donor. Residue His859 coordinates fumarate. Residue His859 coordinates succinate. The FAD site is built by His860 and Glu889. Fumarate contacts are provided by Arg899 and Gly902. Arg899 and Gly902 together coordinate succinate. Residues Ala904 and Val905 each coordinate FAD.

This sequence belongs to the FAD-dependent oxidoreductase 2 family. FRD/SDH subfamily. As to quaternary structure, monomer. Requires FAD as cofactor. FMN is required as a cofactor. In terms of processing, is flavinylated on Thr-447 by ApbE2, encoded in a neighboring gene. Flavinylation is essential for catalytic activity.

It is found in the cytoplasm. It carries out the reaction succinate + NAD(+) = fumarate + NADH + H(+). Its function is as follows. Catalyzes the anaerobic reduction of fumarate to succinate. Uses NADH as the inherent electron donor in this process. Is involved in anaerobic fumarate respiration in K.pneumoniae. The sequence is that of NADH:fumarate oxidoreductase from Klebsiella pneumoniae (strain 342).